A 263-amino-acid polypeptide reads, in one-letter code: tRNA pseudouridine synthase A (263 aa).

The Nucleophile role is filled by Asp-57. Tyr-115 contributes to the substrate binding site.

This sequence belongs to the tRNA pseudouridine synthase TruA family. In terms of assembly, homodimer.

The enzyme catalyses uridine(38/39/40) in tRNA = pseudouridine(38/39/40) in tRNA. Its function is as follows. Formation of pseudouridine at positions 38, 39 and 40 in the anticodon stem and loop of transfer RNAs. The protein is tRNA pseudouridine synthase A of Buchnera aphidicola subsp. Schizaphis graminum (strain Sg).